A 418-amino-acid chain; its full sequence is MTLLALGINHKTAPVALRERVTFTPDTLEQALNSLMAQPLIQGGVVLSTCNRTELYLSVEQQENLQDQLIAWLCDYHQLSPDEVLKSLYWHHGNEAVSHLMRVASGLDSLVLGEPQILGQVKKAFADSQRGHSLSGELERMFQKSFSVAKRVRTETEIGASAVSVAFAACTLARQIFESLTTVNVLLVGAGETIELAARHLHQHKVKKLMIANRTRERAQVLAAEVEAEVISLADIDERLAEADIIISSTASPLPIIGKGMVERALKKRRNQPMLLVDIAVPRDVEPDVGKLPNAYLYSVDDLQAIIESNMAQRQAAAVEAETIVVQESSDFMSWLRAQSAVETIREYRAQADEARAELEARAIQSLQQGADAEKVLRDLAHKLTNRLIHAPTKSLQQAARDGDGERLQILRDGLGLE.

Residues 49–52 (TCNR), Ser109, 114–116 (EPQ), and Gln120 contribute to the substrate site. Cys50 (nucleophile) is an active-site residue. 189–194 (GAGETI) lines the NADP(+) pocket.

This sequence belongs to the glutamyl-tRNA reductase family. In terms of assembly, homodimer.

It carries out the reaction (S)-4-amino-5-oxopentanoate + tRNA(Glu) + NADP(+) = L-glutamyl-tRNA(Glu) + NADPH + H(+). It functions in the pathway porphyrin-containing compound metabolism; protoporphyrin-IX biosynthesis; 5-aminolevulinate from L-glutamyl-tRNA(Glu): step 1/2. Catalyzes the NADPH-dependent reduction of glutamyl-tRNA(Glu) to glutamate 1-semialdehyde (GSA). In Erwinia tasmaniensis (strain DSM 17950 / CFBP 7177 / CIP 109463 / NCPPB 4357 / Et1/99), this protein is Glutamyl-tRNA reductase.